The chain runs to 521 residues: Bifunctional purine biosynthesis protein PurH (521 aa).

The MGS-like domain occupies 1–147; it reads MAVIKRALIS…KNNRDVTVVV (147 aa).

Belongs to the PurH family.

The enzyme catalyses (6R)-10-formyltetrahydrofolate + 5-amino-1-(5-phospho-beta-D-ribosyl)imidazole-4-carboxamide = 5-formamido-1-(5-phospho-D-ribosyl)imidazole-4-carboxamide + (6S)-5,6,7,8-tetrahydrofolate. The catalysed reaction is IMP + H2O = 5-formamido-1-(5-phospho-D-ribosyl)imidazole-4-carboxamide. Its pathway is purine metabolism; IMP biosynthesis via de novo pathway; 5-formamido-1-(5-phospho-D-ribosyl)imidazole-4-carboxamide from 5-amino-1-(5-phospho-D-ribosyl)imidazole-4-carboxamide (10-formyl THF route): step 1/1. The protein operates within purine metabolism; IMP biosynthesis via de novo pathway; IMP from 5-formamido-1-(5-phospho-D-ribosyl)imidazole-4-carboxamide: step 1/1. In Syntrophotalea carbinolica (strain DSM 2380 / NBRC 103641 / GraBd1) (Pelobacter carbinolicus), this protein is Bifunctional purine biosynthesis protein PurH.